The following is a 322-amino-acid chain: Cytochrome f (322 aa).

The N-terminal stretch at 1–35 is a signal peptide; it reads MQNRNIFSWVKEQTTRSISVSIMILIYVITWTSIS. Heme-binding residues include tyrosine 38, cysteine 58, cysteine 61, and histidine 62. The chain crosses the membrane as a helical span at residues 288–308; it reads VQGLFFFFASVILAQIFLVLK.

This sequence belongs to the cytochrome f family. In terms of assembly, the 4 large subunits of the cytochrome b6-f complex are cytochrome b6, subunit IV (17 kDa polypeptide, petD), cytochrome f and the Rieske protein, while the 4 small subunits are PetG, PetL, PetM and PetN. The complex functions as a dimer. Heme serves as cofactor.

Its subcellular location is the plastid. The protein resides in the chloroplast thylakoid membrane. Its function is as follows. Component of the cytochrome b6-f complex, which mediates electron transfer between photosystem II (PSII) and photosystem I (PSI), cyclic electron flow around PSI, and state transitions. This Nandina domestica (Heavenly bamboo) protein is Cytochrome f.